A 250-amino-acid polypeptide reads, in one-letter code: Agamous-like MADS-box protein AGL8 homolog (250 aa).

Residues 3 to 57 enclose the MADS-box domain; the sequence is RGRVQLKRIENKINRQVTFSKRRSGLLKKAHEISVLCDAEVGLIVFSTKGKLFEY. The region spanning 88–178 is the K-box domain; sequence PGSWTLEHAK…SKKVKEREKE (91 aa).

As to expression, abundant in vegetative organs.

The protein localises to the nucleus. Its function is as follows. Probable transcription factor. The polypeptide is Agamous-like MADS-box protein AGL8 homolog (Solanum tuberosum (Potato)).